The chain runs to 85 residues: Large ribosomal subunit protein bL27 (85 aa).

Residues Met1–Arg25 form a disordered region.

It belongs to the bacterial ribosomal protein bL27 family.

This chain is Large ribosomal subunit protein bL27, found in Roseiflexus castenholzii (strain DSM 13941 / HLO8).